The following is a 147-amino-acid chain: 3-hydroxyacyl-[acyl-carrier-protein] dehydratase FabZ (147 aa).

H49 is a catalytic residue.

The protein belongs to the thioester dehydratase family. FabZ subfamily.

The protein resides in the cytoplasm. It carries out the reaction a (3R)-hydroxyacyl-[ACP] = a (2E)-enoyl-[ACP] + H2O. Functionally, involved in unsaturated fatty acids biosynthesis. Catalyzes the dehydration of short chain beta-hydroxyacyl-ACPs and long chain saturated and unsaturated beta-hydroxyacyl-ACPs. The polypeptide is 3-hydroxyacyl-[acyl-carrier-protein] dehydratase FabZ (Alkaliphilus metalliredigens (strain QYMF)).